The sequence spans 331 residues: tRNA uridine(34) hydroxylase (331 aa).

One can recognise a Rhodanese domain in the interval 123–217 (TDPEVLLIDT…YLEDVPQEES (95 aa)). The active-site Cysteine persulfide intermediate is Cys-177. The tract at residues 293–331 (KSRGEEHIGSEAAKAIKKRQAEKKLKRKNYHQHLTQGAE) is disordered. Residues 307–323 (AIKKRQAEKKLKRKNYH) show a composition bias toward basic residues.

The protein belongs to the TrhO family.

The catalysed reaction is uridine(34) in tRNA + AH2 + O2 = 5-hydroxyuridine(34) in tRNA + A + H2O. Its function is as follows. Catalyzes oxygen-dependent 5-hydroxyuridine (ho5U) modification at position 34 in tRNAs. The chain is tRNA uridine(34) hydroxylase from Hahella chejuensis (strain KCTC 2396).